A 137-amino-acid polypeptide reads, in one-letter code: Large ribosomal subunit protein uL16 (137 aa).

This sequence belongs to the universal ribosomal protein uL16 family. Part of the 50S ribosomal subunit.

In terms of biological role, binds 23S rRNA and is also seen to make contacts with the A and possibly P site tRNAs. This is Large ribosomal subunit protein uL16 from Legionella pneumophila (strain Paris).